The primary structure comprises 204 residues: Proteasome subunit beta type-3 (204 aa).

This sequence belongs to the peptidase T1B family. In terms of assembly, the 26S proteasome consists of a 20S proteasome core and two 19S regulatory subunits. The 20S proteasome core is composed of 28 subunits that are arranged in four stacked rings, resulting in a barrel-shaped structure. The two end rings are each formed by seven alpha subunits, and the two central rings are each formed by seven beta subunits. The catalytic chamber with the active sites is on the inside of the barrel.

It is found in the cytoplasm. It localises to the nucleus. In terms of biological role, non-catalytic component of the proteasome, a multicatalytic proteinase complex which is characterized by its ability to cleave peptides with Arg, Phe, Tyr, Leu, and Glu adjacent to the leaving group at neutral or slightly basic pH. The proteasome has an ATP-dependent proteolytic activity. This chain is Proteasome subunit beta type-3 (PBC1), found in Picea mariana (Black spruce).